The sequence spans 209 residues: Potassium-transporting ATPase KdpC subunit (209 aa).

The helical transmembrane segment at 10–30 threads the bilayer; that stretch reads VISLVFLFVLGFLFPTVTSLI.

The protein belongs to the KdpC family. As to quaternary structure, the system is composed of three essential subunits: KdpA, KdpB and KdpC.

It localises to the cell membrane. Part of the high-affinity ATP-driven potassium transport (or Kdp) system, which catalyzes the hydrolysis of ATP coupled with the electrogenic transport of potassium into the cytoplasm. This subunit acts as a catalytic chaperone that increases the ATP-binding affinity of the ATP-hydrolyzing subunit KdpB by the formation of a transient KdpB/KdpC/ATP ternary complex. In Thermoplasma volcanium (strain ATCC 51530 / DSM 4299 / JCM 9571 / NBRC 15438 / GSS1), this protein is Potassium-transporting ATPase KdpC subunit.